Consider the following 836-residue polypeptide: Protein translocase subunit SecA (836 aa).

ATP-binding positions include glutamine 85, glycine 103–threonine 107, and aspartate 492. Zn(2+) contacts are provided by cysteine 820, cysteine 822, cysteine 831, and cysteine 832.

Belongs to the SecA family. Monomer and homodimer. Part of the essential Sec protein translocation apparatus which comprises SecA, SecYEG and auxiliary proteins SecDF. Other proteins may also be involved. The cofactor is Zn(2+).

It is found in the cell membrane. The protein resides in the cytoplasm. The enzyme catalyses ATP + H2O + cellular proteinSide 1 = ADP + phosphate + cellular proteinSide 2.. In terms of biological role, part of the Sec protein translocase complex. Interacts with the SecYEG preprotein conducting channel. Has a central role in coupling the hydrolysis of ATP to the transfer of proteins into and across the cell membrane, serving as an ATP-driven molecular motor driving the stepwise translocation of polypeptide chains across the membrane. The chain is Protein translocase subunit SecA from Clostridium botulinum (strain Eklund 17B / Type B).